Consider the following 59-residue polypeptide: Large ribosomal subunit protein uL30 (59 aa).

The protein belongs to the universal ribosomal protein uL30 family. In terms of assembly, part of the 50S ribosomal subunit.

The polypeptide is Large ribosomal subunit protein uL30 (Yersinia pseudotuberculosis serotype I (strain IP32953)).